Reading from the N-terminus, the 565-residue chain is uncharacterized protein (565 aa).

A signal peptide spans 1–19 (MRWLATFVALLIAISSVSA). Positions 494–504 (TGAENVTNNSV) are enriched in polar residues. Residues 494 to 525 (TGAENVTNNSVTATTPPAKASQQTPAPATPPV) form a disordered region. Over residues 505–519 (TATTPPAKASQQTPA) the composition is skewed to low complexity.

This is an uncharacterized protein from Archaeoglobus fulgidus (strain ATCC 49558 / DSM 4304 / JCM 9628 / NBRC 100126 / VC-16).